The following is a 251-amino-acid chain: Hydroxyacylglutathione hydrolase (251 aa).

Residues histidine 53, histidine 55, aspartate 57, histidine 58, histidine 110, aspartate 127, and histidine 165 each coordinate Zn(2+).

It belongs to the metallo-beta-lactamase superfamily. Glyoxalase II family. As to quaternary structure, monomer. Zn(2+) is required as a cofactor.

The catalysed reaction is an S-(2-hydroxyacyl)glutathione + H2O = a 2-hydroxy carboxylate + glutathione + H(+). It participates in secondary metabolite metabolism; methylglyoxal degradation; (R)-lactate from methylglyoxal: step 2/2. In terms of biological role, thiolesterase that catalyzes the hydrolysis of S-D-lactoyl-glutathione to form glutathione and D-lactic acid. The chain is Hydroxyacylglutathione hydrolase from Citrobacter koseri (strain ATCC BAA-895 / CDC 4225-83 / SGSC4696).